Consider the following 416-residue polypeptide: Pentraxin fusion protein (416 aa).

Residues 1 to 14 (MKSLLLFLKSQVFG) form the signal peptide. N-linked (GlcNAc...) asparagine glycosylation is present at asparagine 129. A disordered region spans residues 184-206 (GTEASDSSESVDGTEAPASPESD). One can recognise a Pentraxin (PTX) domain in the interval 220–416 (TNKSFMFPKE…YSMIGNVAEV (197 aa)). Residue asparagine 221 is glycosylated (N-linked (GlcNAc...) asparagine). A disulfide bridge connects residues cysteine 251 and cysteine 311. Residues aspartate 275, glutamine 353, aspartate 354, and glutamine 364 each contribute to the Ca(2+) site.

It depends on Ca(2+) as a cofactor.

This Xenopus laevis (African clawed frog) protein is Pentraxin fusion protein (pxn1).